The following is a 268-amino-acid chain: Cytochrome b-c1 complex subunit Rieske-3, mitochondrial (268 aa).

The N-terminal 56 residues, 1 to 56 (MLRIAGRKLSSSAATRSSSAFFTRNPFTFTDDSSSPARSPSPASLASQFLDQFRGF), are a transit peptide targeting the mitochondrion. The Mitochondrial matrix segment spans residues 57-105 (SSNSVSPAHQTGLVSDLPATVAAIKNPSSKIVYDDSNHERYPPGDPSKR). Residues 106 to 128 (AFAYFVLTGGRFVYASLVRLLIL) form a helical membrane-spanning segment. Residues 129-268 (KFVLSMSASK…FMEENKLLIG (140 aa)) are Mitochondrial intermembrane-facing. The region spanning 178-266 (INLANSVDLG…YSFMEENKLL (89 aa)) is the Rieske domain. [2Fe-2S] cluster is bound by residues C211, H213, C230, and H233. A disulfide bridge connects residues C216 and C232.

It belongs to the Rieske iron-sulfur protein family. As to quaternary structure, component of the ubiquinol-cytochrome c oxidoreductase (cytochrome b-c1 complex, complex III, CIII), a multisubunit enzyme composed of 3 respiratory subunits cytochrome b, cytochrome c1 and Rieske protein, 2 core protein subunits, and several low-molecular weight protein subunits. The complex exists as an obligatory dimer and forms supercomplexes (SCs) in the inner mitochondrial membrane with cytochrome c oxidase (complex IV, CIV). [2Fe-2S] cluster is required as a cofactor. As to expression, high levels are seen in the flowers while a low level expression is seen in the roots, leaves and stems.

It is found in the mitochondrion inner membrane. The enzyme catalyses a quinol + 2 Fe(III)-[cytochrome c](out) = a quinone + 2 Fe(II)-[cytochrome c](out) + 2 H(+)(out). In terms of biological role, component of the ubiquinol-cytochrome c oxidoreductase, a multisubunit transmembrane complex that is part of the mitochondrial electron transport chain which drives oxidative phosphorylation. The respiratory chain contains 3 multisubunit complexes succinate dehydrogenase (complex II, CII), ubiquinol-cytochrome c oxidoreductase (cytochrome b-c1 complex, complex III, CIII) and cytochrome c oxidase (complex IV, CIV), that cooperate to transfer electrons derived from NADH and succinate to molecular oxygen, creating an electrochemical gradient over the inner membrane that drives transmembrane transport and the ATP synthase. The cytochrome b-c1 complex catalyzes electron transfer from ubiquinol to cytochrome c, linking this redox reaction to translocation of protons across the mitochondrial inner membrane, with protons being carried across the membrane as hydrogens on the quinol. In the process called Q cycle, 2 protons are consumed from the matrix, 4 protons are released into the intermembrane space and 2 electrons are passed to cytochrome c. The Rieske protein is a catalytic core subunit containing a [2Fe-2S] iron-sulfur cluster. It cycles between 2 conformational states during catalysis to transfer electrons from the quinol bound in the Q(0) site in cytochrome b to cytochrome c1. The polypeptide is Cytochrome b-c1 complex subunit Rieske-3, mitochondrial (Nicotiana tabacum (Common tobacco)).